A 439-amino-acid polypeptide reads, in one-letter code: Dolichyl-diphosphooligosaccharide--protein glycosyltransferase 48 kDa subunit (439 aa).

The first 26 residues, 1-26 (MATRAARVWSGWWLLLLPLLGLAGAS), serve as a signal peptide directing secretion. Over 27–409 (GPRTLVLLDN…QYERFIPSAY (383 aa)) the chain is Lumenal. The chain crosses the membrane as a helical span at residues 410–430 (PYYASAFSMMLGLFIFSVVFL). Residues 431–439 (HMKEKEKSD) are Cytoplasmic-facing.

The protein belongs to the DDOST 48 kDa subunit family. As to quaternary structure, component of the oligosaccharyltransferase (OST) complex. OST exists in two different complex forms which contain common core subunits RPN1, RPN2, OST48, OST4, DAD1 and TMEM258, either STT3A or STT3B as catalytic subunits, and form-specific accessory subunits. STT3A complex assembly occurs through the formation of 3 subcomplexes. Subcomplex 1 contains RPN1 and TMEM258, subcomplex 2 contains the STT3A-specific subunits STT3A, DC2/OSTC, and KCP2 as well as the core subunit OST4, and subcomplex 3 contains RPN2, DAD1, and OST48. The STT3A complex can form stable complexes with the Sec61 complex or with both the Sec61 and TRAP complexes. Interacts with SMIM22.

Its subcellular location is the endoplasmic reticulum membrane. It participates in protein modification; protein glycosylation. Its function is as follows. Subunit of the oligosaccharyl transferase (OST) complex that catalyzes the initial transfer of a defined glycan (Glc(3)Man(9)GlcNAc(2) in eukaryotes) from the lipid carrier dolichol-pyrophosphate to an asparagine residue within an Asn-X-Ser/Thr consensus motif in nascent polypeptide chains, the first step in protein N-glycosylation. N-glycosylation occurs cotranslationally and the complex associates with the Sec61 complex at the channel-forming translocon complex that mediates protein translocation across the endoplasmic reticulum (ER). All subunits are required for a maximal enzyme activity. Required for the assembly of both SST3A- and SS3B-containing OST complexes. This is Dolichyl-diphosphooligosaccharide--protein glycosyltransferase 48 kDa subunit from Bos taurus (Bovine).